We begin with the raw amino-acid sequence, 166 residues long: NADPH-dependent 7-cyano-7-deazaguanine reductase (166 aa).

Cysteine 57 functions as the Thioimide intermediate in the catalytic mechanism. The active-site Proton donor is the aspartate 64. Substrate contacts are provided by residues 79 to 81 and 98 to 99; these read VES and HE.

The protein belongs to the GTP cyclohydrolase I family. QueF type 1 subfamily.

It localises to the cytoplasm. It catalyses the reaction 7-aminomethyl-7-carbaguanine + 2 NADP(+) = 7-cyano-7-deazaguanine + 2 NADPH + 3 H(+). It functions in the pathway tRNA modification; tRNA-queuosine biosynthesis. Catalyzes the NADPH-dependent reduction of 7-cyano-7-deazaguanine (preQ0) to 7-aminomethyl-7-deazaguanine (preQ1). This Staphylococcus aureus (strain JH1) protein is NADPH-dependent 7-cyano-7-deazaguanine reductase.